The primary structure comprises 411 residues: Mannan endo-1,4-beta-mannosidase 1 (411 aa).

The first 17 residues, 1–17 (MLNILPFFLFFLPFLIG), serve as a signal peptide directing secretion. An N-linked (GlcNAc...) asparagine glycan is attached at N33. Residues W87 and N197 each coordinate substrate. Catalysis depends on E198, which acts as the Proton donor. N202 carries N-linked (GlcNAc...) asparagine glycosylation. Y277 contributes to the substrate binding site. Catalysis depends on E319, which acts as the Nucleophile. Residue W361 participates in substrate binding. N-linked (GlcNAc...) asparagine glycans are attached at residues N366 and N384.

This sequence belongs to the glycosyl hydrolase 5 (cellulase A) family. As to expression, expressed in roots, stems and flowers.

The protein resides in the secreted. The catalysed reaction is Random hydrolysis of (1-&gt;4)-beta-D-mannosidic linkages in mannans, galactomannans and glucomannans.. The chain is Mannan endo-1,4-beta-mannosidase 1 (MAN1) from Arabidopsis thaliana (Mouse-ear cress).